The following is a 913-amino-acid chain: Anoctamin-5 (913 aa).

Topologically, residues 1–299 are cytoplasmic; that stretch reads MGDPDLLEVL…DLIKNYYGEK (299 aa). Residues 300–320 form a helical membrane-spanning segment; that stretch reads IGIYFVFLGFYTEMLFFAAVV. The Extracellular segment spans residues 321 to 380; it reads GLACFIYGLLSMEHNTSSTEICDPEIGGQMIMCPLCDQVCDYWRLNSTCLASKFSHLFDN. N-linked (GlcNAc...) asparagine glycosylation is found at N335, N366, and N380. The chain crosses the membrane as a helical span at residues 381 to 401; sequence ESTVFFAIFMGIWVTLFLEFW. At 402-462 the chain is on the cytoplasmic side; the sequence is KQRQARLEYE…YTRIPWYFLS (61 aa). The helical transmembrane segment at 463-483 threads the bilayer; it reads GATVTLWMSLVVTSMVAVIVY. The Extracellular portion of the chain corresponds to 484–511; the sequence is RLSVFATFASFMESDASLKQVKSFLTPQ. Residues 512–532 traverse the membrane as a helical segment; it reads ITTSLTGSCLNFIVILILNFF. Topologically, residues 533-557 are cytoplasmic; it reads YEKISAWITKMEIPRTYQEYESSLT. A helical transmembrane segment spans residues 558 to 578; it reads LKMFLFQFVNFYSSCFYVAFF. Residues 579–679 are Extracellular-facing; sequence KGKFVGYPGK…FYEYLETVTQ (101 aa). A helical membrane pass occupies residues 680 to 700; that stretch reads FGFVTLFVASFPLAPLLALIN. Topologically, residues 701-732 are cytoplasmic; sequence NIVEIRVDAWKLTTQYRRTVASKAHSIGVWQD. The helical transmembrane segment at 733–753 threads the bilayer; the sequence is ILYGMAVLSVATNAFIVAFTS. Over 754–834 the chain is Extracellular; it reads DIIPRLVYYY…FWHVLAAKMT (81 aa). Residues N768, N778, and N791 are each glycosylated (N-linked (GlcNAc...) asparagine). Residues 835-855 traverse the membrane as a helical segment; the sequence is FIIVMEHVVFLVKFLLAWMIP. Residues 856 to 913 are Cytoplasmic-facing; the sequence is DVPKDVVERIKREKLMTIKILHDFELNKLKENLGINSNEFAKHVMIEENKAQLAKSTL.

It belongs to the anoctamin family. Highly expressed in brain, heart, kidney, lung, and skeletal muscle. Weakly expressed in bone marrow, fetal liver, placenta, spleen, thymus, osteoblasts and periodontal ligament cells.

It localises to the endoplasmic reticulum membrane. The protein localises to the cell membrane. In terms of biological role, plays a role in plasma membrane repair in a process involving annexins. Does not exhibit calcium-activated chloride channel (CaCC) activity. The chain is Anoctamin-5 (ANO5) from Homo sapiens (Human).